The following is a 219-amino-acid chain: Orotate phosphoribosyltransferase (219 aa).

Lys26 serves as a coordination point for 5-phospho-alpha-D-ribose 1-diphosphate. 34–35 is an orotate binding site; it reads FF. 5-phospho-alpha-D-ribose 1-diphosphate is bound by residues 72–73, Arg102, Lys103, Lys106, His108, and 128–136; these read YK and DDVITAGTA. Orotate-binding residues include Thr132 and Arg160.

This sequence belongs to the purine/pyrimidine phosphoribosyltransferase family. PyrE subfamily. Homodimer.

It carries out the reaction orotidine 5'-phosphate + diphosphate = orotate + 5-phospho-alpha-D-ribose 1-diphosphate. It functions in the pathway pyrimidine metabolism; UMP biosynthesis via de novo pathway; UMP from orotate: step 1/2. Functionally, catalyzes the transfer of a ribosyl phosphate group from 5-phosphoribose 1-diphosphate to orotate, leading to the formation of orotidine monophosphate (OMP). This is Orotate phosphoribosyltransferase (URA5) from Yarrowia lipolytica (strain CLIB 122 / E 150) (Yeast).